A 487-amino-acid chain; its full sequence is UDP-N-acetylmuramoyl-L-alanyl-D-glutamate--2,6-diaminopimelate ligase (487 aa).

UDP-N-acetyl-alpha-D-muramoyl-L-alanyl-D-glutamate contacts are provided by L23 and S25. Position 108 to 114 (108 to 114 (GTNGKTS)) interacts with ATP. Residues 150-151 (TT), S177, Q183, and R185 contribute to the UDP-N-acetyl-alpha-D-muramoyl-L-alanyl-D-glutamate site. Position 217 is an N6-carboxylysine (K217). Meso-2,6-diaminopimelate-binding positions include R378, 402–405 (DNPR), G453, and E457. The Meso-diaminopimelate recognition motif motif lies at 402–405 (DNPR).

The protein belongs to the MurCDEF family. MurE subfamily. Mg(2+) is required as a cofactor. Carboxylation is probably crucial for Mg(2+) binding and, consequently, for the gamma-phosphate positioning of ATP.

Its subcellular location is the cytoplasm. It carries out the reaction UDP-N-acetyl-alpha-D-muramoyl-L-alanyl-D-glutamate + meso-2,6-diaminopimelate + ATP = UDP-N-acetyl-alpha-D-muramoyl-L-alanyl-gamma-D-glutamyl-meso-2,6-diaminopimelate + ADP + phosphate + H(+). It participates in cell wall biogenesis; peptidoglycan biosynthesis. In terms of biological role, catalyzes the addition of meso-diaminopimelic acid to the nucleotide precursor UDP-N-acetylmuramoyl-L-alanyl-D-glutamate (UMAG) in the biosynthesis of bacterial cell-wall peptidoglycan. The chain is UDP-N-acetylmuramoyl-L-alanyl-D-glutamate--2,6-diaminopimelate ligase from Ectopseudomonas mendocina (strain ymp) (Pseudomonas mendocina).